Consider the following 428-residue polypeptide: Glutamate-1-semialdehyde 2,1-aminomutase 1 (428 aa).

Lys267 is subject to N6-(pyridoxal phosphate)lysine.

It belongs to the class-III pyridoxal-phosphate-dependent aminotransferase family. HemL subfamily. Homodimer. Pyridoxal 5'-phosphate serves as cofactor.

The protein localises to the cytoplasm. The catalysed reaction is (S)-4-amino-5-oxopentanoate = 5-aminolevulinate. The protein operates within porphyrin-containing compound metabolism; protoporphyrin-IX biosynthesis; 5-aminolevulinate from L-glutamyl-tRNA(Glu): step 2/2. This Staphylococcus aureus (strain NCTC 8325 / PS 47) protein is Glutamate-1-semialdehyde 2,1-aminomutase 1 (hemL1).